A 366-amino-acid chain; its full sequence is 3-dehydroquinate synthase (366 aa).

Residues 69–74 (DGEAHK), 103–107 (GVIGD), 127–128 (TT), lysine 140, lysine 149, and 167–170 (TLNT) each bind NAD(+). 3 residues coordinate Zn(2+): glutamate 182, histidine 245, and histidine 262.

This sequence belongs to the sugar phosphate cyclases superfamily. Dehydroquinate synthase family. It depends on Co(2+) as a cofactor. Zn(2+) serves as cofactor. The cofactor is NAD(+).

It localises to the cytoplasm. The catalysed reaction is 7-phospho-2-dehydro-3-deoxy-D-arabino-heptonate = 3-dehydroquinate + phosphate. It participates in metabolic intermediate biosynthesis; chorismate biosynthesis; chorismate from D-erythrose 4-phosphate and phosphoenolpyruvate: step 2/7. In terms of biological role, catalyzes the conversion of 3-deoxy-D-arabino-heptulosonate 7-phosphate (DAHP) to dehydroquinate (DHQ). The protein is 3-dehydroquinate synthase of Pseudomonas fluorescens (strain SBW25).